The chain runs to 396 residues: 1-deoxy-D-xylulose 5-phosphate reductoisomerase (396 aa).

Residues threonine 15, glycine 16, serine 17, isoleucine 18, glycine 41, and asparagine 129 each coordinate NADPH. Lysine 130 serves as a coordination point for 1-deoxy-D-xylulose 5-phosphate. NADPH is bound at residue glutamate 131. Aspartate 155 contacts Mn(2+). 1-deoxy-D-xylulose 5-phosphate is bound by residues serine 156, glutamate 157, serine 182, and histidine 205. Glutamate 157 lines the Mn(2+) pocket. Glycine 211 is a binding site for NADPH. Residues serine 218, asparagine 223, lysine 224, and glutamate 227 each coordinate 1-deoxy-D-xylulose 5-phosphate. Glutamate 227 serves as a coordination point for Mn(2+).

Belongs to the DXR family. Mg(2+) is required as a cofactor. It depends on Mn(2+) as a cofactor.

It catalyses the reaction 2-C-methyl-D-erythritol 4-phosphate + NADP(+) = 1-deoxy-D-xylulose 5-phosphate + NADPH + H(+). It functions in the pathway isoprenoid biosynthesis; isopentenyl diphosphate biosynthesis via DXP pathway; isopentenyl diphosphate from 1-deoxy-D-xylulose 5-phosphate: step 1/6. Its function is as follows. Catalyzes the NADPH-dependent rearrangement and reduction of 1-deoxy-D-xylulose-5-phosphate (DXP) to 2-C-methyl-D-erythritol 4-phosphate (MEP). In Xanthomonas oryzae pv. oryzae (strain MAFF 311018), this protein is 1-deoxy-D-xylulose 5-phosphate reductoisomerase.